A 113-amino-acid polypeptide reads, in one-letter code: Large ribosomal subunit protein uL22 (113 aa).

This sequence belongs to the universal ribosomal protein uL22 family. In terms of assembly, part of the 50S ribosomal subunit.

Its function is as follows. This protein binds specifically to 23S rRNA; its binding is stimulated by other ribosomal proteins, e.g. L4, L17, and L20. It is important during the early stages of 50S assembly. It makes multiple contacts with different domains of the 23S rRNA in the assembled 50S subunit and ribosome. Functionally, the globular domain of the protein is located near the polypeptide exit tunnel on the outside of the subunit, while an extended beta-hairpin is found that lines the wall of the exit tunnel in the center of the 70S ribosome. The sequence is that of Large ribosomal subunit protein uL22 from Syntrophomonas wolfei subsp. wolfei (strain DSM 2245B / Goettingen).